Consider the following 866-residue polypeptide: Probable outer membrane usher protein ElfC (866 aa).

The first 35 residues, 1–35 (MYRTHRQHSLLSSGGVPSFIGGLVVFVSAAFNAQA), serve as a signal peptide directing secretion.

This sequence belongs to the fimbrial export usher family.

It localises to the cell outer membrane. In terms of biological role, part of the elfADCG fimbrial operon, which could be required for adherence to host epithelial cells. Could be involved in the export and assembly of the ElfA fimbrial subunits across the outer membrane. The protein is Probable outer membrane usher protein ElfC (elfC) of Escherichia coli O157:H7.